The following is a 345-amino-acid chain: Phosphate acyltransferase (345 aa).

Belongs to the PlsX family. As to quaternary structure, homodimer. Probably interacts with PlsY.

The protein localises to the cytoplasm. It catalyses the reaction a fatty acyl-[ACP] + phosphate = an acyl phosphate + holo-[ACP]. It functions in the pathway lipid metabolism; phospholipid metabolism. Its function is as follows. Catalyzes the reversible formation of acyl-phosphate (acyl-PO(4)) from acyl-[acyl-carrier-protein] (acyl-ACP). This enzyme utilizes acyl-ACP as fatty acyl donor, but not acyl-CoA. The protein is Phosphate acyltransferase of Photorhabdus laumondii subsp. laumondii (strain DSM 15139 / CIP 105565 / TT01) (Photorhabdus luminescens subsp. laumondii).